Reading from the N-terminus, the 397-residue chain is 1-deoxy-D-xylulose 5-phosphate reductoisomerase (397 aa).

8 residues coordinate NADPH: Thr12, Gly13, Ser14, Ile15, Gly38, Lys39, Asn40, and Asn126. Residue Lys127 coordinates 1-deoxy-D-xylulose 5-phosphate. Glu128 contacts NADPH. Mn(2+) is bound at residue Asp152. 1-deoxy-D-xylulose 5-phosphate is bound by residues Ser153, Glu154, Ser188, and His211. Glu154 is a binding site for Mn(2+). An NADPH-binding site is contributed by Gly217. Residues Ser224, Asn229, Lys230, and Glu233 each coordinate 1-deoxy-D-xylulose 5-phosphate. Glu233 contacts Mn(2+).

It belongs to the DXR family. It depends on Mg(2+) as a cofactor. Mn(2+) is required as a cofactor.

It carries out the reaction 2-C-methyl-D-erythritol 4-phosphate + NADP(+) = 1-deoxy-D-xylulose 5-phosphate + NADPH + H(+). The protein operates within isoprenoid biosynthesis; isopentenyl diphosphate biosynthesis via DXP pathway; isopentenyl diphosphate from 1-deoxy-D-xylulose 5-phosphate: step 1/6. Its function is as follows. Catalyzes the NADPH-dependent rearrangement and reduction of 1-deoxy-D-xylulose-5-phosphate (DXP) to 2-C-methyl-D-erythritol 4-phosphate (MEP). This chain is 1-deoxy-D-xylulose 5-phosphate reductoisomerase, found in Haemophilus influenzae (strain PittGG).